The sequence spans 666 residues: Probable potassium transport system protein Kup (666 aa).

The next 12 membrane-spanning stretches (helical) occupy residues 16–36 (GFII…LYTM), 58–78 (ISLI…LIAL), 100–120 (PWLI…GALT), 141–161 (IYQN…VLFG), 165–185 (FGTG…FSFL), 221–241 (IFIL…YSDL), 253–273 (WPFV…WILA), 294–314 (VYLV…LISG), 343–363 (LYIP…VLAF), 373–393 (YGLA…YYLI), 399–419 (PILA…FFLA), and 424–444 (FMHG…VMFI).

The protein belongs to the HAK/KUP transporter (TC 2.A.72) family.

It localises to the cell membrane. It carries out the reaction K(+)(in) + H(+)(in) = K(+)(out) + H(+)(out). Functionally, transport of potassium into the cell. Likely operates as a K(+):H(+) symporter. The polypeptide is Probable potassium transport system protein Kup (Streptococcus pyogenes serotype M49 (strain NZ131)).